A 195-amino-acid polypeptide reads, in one-letter code: Protein GrpE (195 aa).

This sequence belongs to the GrpE family. In terms of assembly, homodimer.

The protein localises to the cytoplasm. Participates actively in the response to hyperosmotic and heat shock by preventing the aggregation of stress-denatured proteins, in association with DnaK and GrpE. It is the nucleotide exchange factor for DnaK and may function as a thermosensor. Unfolded proteins bind initially to DnaJ; upon interaction with the DnaJ-bound protein, DnaK hydrolyzes its bound ATP, resulting in the formation of a stable complex. GrpE releases ADP from DnaK; ATP binding to DnaK triggers the release of the substrate protein, thus completing the reaction cycle. Several rounds of ATP-dependent interactions between DnaJ, DnaK and GrpE are required for fully efficient folding. In Francisella tularensis subsp. novicida (strain U112), this protein is Protein GrpE.